A 348-amino-acid polypeptide reads, in one-letter code: Dihydroorotase (348 aa).

The Zn(2+) site is built by His-17 and His-19. Substrate is bound by residues 19-21 and Asn-45; that span reads HLR. Lys-103, His-140, and His-178 together coordinate Zn(2+). Lys-103 bears the N6-carboxylysine mark. His-140 lines the substrate pocket. Leu-223 contacts substrate. Asp-251 is a binding site for Zn(2+). The active site involves Asp-251. Positions 255 and 267 each coordinate substrate.

Belongs to the metallo-dependent hydrolases superfamily. DHOase family. Class II DHOase subfamily. Homodimer. Requires Zn(2+) as cofactor.

It carries out the reaction (S)-dihydroorotate + H2O = N-carbamoyl-L-aspartate + H(+). It functions in the pathway pyrimidine metabolism; UMP biosynthesis via de novo pathway; (S)-dihydroorotate from bicarbonate: step 3/3. Its function is as follows. Catalyzes the reversible cyclization of carbamoyl aspartate to dihydroorotate. The protein is Dihydroorotase of Yersinia enterocolitica serotype O:8 / biotype 1B (strain NCTC 13174 / 8081).